The sequence spans 1431 residues: Probable ATP-dependent RNA helicase spindle-E (1431 aa).

Residues 127-294 (LAAIRENPVV…FAMSSSLPPV (168 aa)) form the Helicase ATP-binding domain. 140–147 (GETGCGKT) lines the ATP pocket. A DEAH box motif is present at residues 240–243 (DEVH). The 173-residue stretch at 354–526 (QSQQSYEEAK…NSVLKAKELE (173 aa)) folds into the Helicase C-terminal domain. A Tudor domain is found at 937-1000 (AKAVTKGLQL…RLMSPQLKRD (64 aa)).

Belongs to the DEAD box helicase family. DEAH subfamily.

The protein resides in the cytoplasm. It catalyses the reaction ATP + H2O = ADP + phosphate + H(+). In terms of biological role, probable ATP-binding RNA helicase which plays a central role during spermatogenesis and oogenesis by repressing transposable elements and preventing their mobilization, which is essential for the germline integrity. Acts via the piRNA metabolic process, which mediates the repression of transposable elements during meiosis by forming complexes composed of piRNAs and Piwi and govern the methylation and subsequent repression of transposons. Involved in the repression of LTR retrotransposon copia. Also involved in telomere regulation by repressing specialized telomeric retroelements HeT-A, TAHRE, and TART; Drosophila telomeres being maintained by transposition of specialized telomeric retroelements. Involved in telomeric trans-silencing, a repression mechanism by which a transposon or a transgene inserted in subtelomeric heterochromatin has the capacity to repress in trans in the female germline, a homologous transposon, or transgene located in euchromatin. Involved in the repression of testis-expressed Stellate genes by the homologous Su(Ste) repeats. Required for anteroposterior and dorsoventral axis formation during oogenesis. This Drosophila mojavensis (Fruit fly) protein is Probable ATP-dependent RNA helicase spindle-E (spn-E).